The primary structure comprises 289 residues: NAC domain-containing protein 2 (289 aa).

Positions 7–158 constitute an NAC domain; sequence LPPGFRFHPT…DWVLCRIYNK (152 aa).

Interacts with KIN10 and KIN11.

The protein localises to the nucleus. The sequence is that of NAC domain-containing protein 2 (NAC002) from Arabidopsis thaliana (Mouse-ear cress).